Here is a 120-residue protein sequence, read N- to C-terminus: Ribosome-binding factor A (120 aa).

It belongs to the RbfA family. As to quaternary structure, monomer. Binds 30S ribosomal subunits, but not 50S ribosomal subunits or 70S ribosomes.

The protein resides in the cytoplasm. Functionally, one of several proteins that assist in the late maturation steps of the functional core of the 30S ribosomal subunit. Associates with free 30S ribosomal subunits (but not with 30S subunits that are part of 70S ribosomes or polysomes). Required for efficient processing of 16S rRNA. May interact with the 5'-terminal helix region of 16S rRNA. The sequence is that of Ribosome-binding factor A from Dictyoglomus thermophilum (strain ATCC 35947 / DSM 3960 / H-6-12).